The chain runs to 637 residues: Delta(14)-sterol reductase LBR (637 aa).

In terms of domain architecture, Tudor spans 1–62; that stretch reads MPNRKYADGE…DIRLQSSFKQ (62 aa). The Nuclear segment spans residues 1 to 205; that stretch reads MPNRKYADGE…KTKELEFGGR (205 aa). The segment covering 57-73 has biased composition (low complexity); that stretch reads QSSFKQRKSQSSSSSPS. Residues 57 to 151 form a disordered region; sequence QSSFKQRKSQ…SKLLEQQKLK (95 aa). Residues 74-97 show a composition bias toward basic residues; the sequence is RRSRSRSRSRSPGRPAKGRRRSSS. S95 and S96 each carry phosphoserine; by PKA. Composition is skewed to basic and acidic residues over residues 98-110 and 124-151; these read HSRE…KKII and NTRR…QKLK. 8 helical membrane passes run 206-226, 250-270, 288-309, 317-338, 378-399, 403-425, 466-486, and 554-574; these read FGTF…VLMC, VFGV…LPIG, INGF…YFQF, HFVQ…YLYI, YFCE…MLLA, IHNQ…LYVV, FYLV…ITIL, and PCGF…CLLV.

It belongs to the ERG4/ERG24 family. In terms of assembly, interacts with DNA. Interaction with DNA is sequence independent with higher affinity for supercoiled and relaxed circular DNA than linear DNA.

The protein localises to the nucleus inner membrane. The protein resides in the nucleus. It is found in the cytoplasm. Its subcellular location is the endoplasmic reticulum membrane. It catalyses the reaction 5alpha-cholest-8,14-dien-3beta-ol + NADPH + H(+) = 5alpha-cholest-8-en-3beta-ol + NADP(+). The catalysed reaction is 4,4-dimethyl-5alpha-cholesta-8,24-dien-3beta-ol + NADP(+) = 4,4-dimethyl-5alpha-cholesta-8,14,24-trien-3beta-ol + NADPH + H(+). It carries out the reaction 4,4-dimethyl-8,14-cholestadien-3beta-ol + NADPH + H(+) = 4,4-dimethyl-5alpha-cholest-8-en-3beta-ol + NADP(+). Its pathway is steroid biosynthesis; cholesterol biosynthesis. Catalyzes the reduction of the C14-unsaturated bond of lanosterol, as part of the metabolic pathway leading to cholesterol biosynthesis. Anchors the lamina and the heterochromatin to the inner nuclear membrane. The chain is Delta(14)-sterol reductase LBR (LBR) from Gallus gallus (Chicken).